The following is a 75-amino-acid chain: Protein SlyX homolog (75 aa).

Residues 56–75 (KNMDSSNMEDPANEPPPPHY) form a disordered region.

The protein belongs to the SlyX family.

The polypeptide is Protein SlyX homolog (Vibrio parahaemolyticus serotype O3:K6 (strain RIMD 2210633)).